Consider the following 231-residue polypeptide: Proteasome subunit alpha type-2 (231 aa).

Belongs to the peptidase T1A family. As to quaternary structure, the 26S proteasome consists of a 20S proteasome core and two 19S regulatory subunits. The 20S proteasome core is composed of 28 subunits that are arranged in four stacked rings, resulting in a barrel-shaped structure. The two end rings are each formed by seven alpha subunits, and the two central rings are each formed by seven beta subunits. The catalytic chamber with the active sites is on the inside of the barrel.

It localises to the cytoplasm. It is found in the nucleus. Functionally, the proteasome is a multicatalytic proteinase complex which is characterized by its ability to cleave peptides with Arg, Phe, Tyr, Leu, and Glu adjacent to the leaving group at neutral or slightly basic pH. The proteasome has an ATP-dependent proteolytic activity. This chain is Proteasome subunit alpha type-2, found in Trypanosoma brucei brucei.